Here is a 187-residue protein sequence, read N- to C-terminus: ATP synthase subunit b 2 (187 aa).

Positions 1–25 are disordered; it reads MAESHGGAKGPAAGAHTGAEGGHGG. The helical transmembrane segment at 39–59 threads the bilayer; it reads LVSLAIFFVVLYVIVSKLALP. Residues 103-122 are disordered; that stretch reads RAQAIGNESRDKANAQAETE. Basic and acidic residues predominate over residues 110 to 122; it reads ESRDKANAQAETE.

This sequence belongs to the ATPase B chain family. As to quaternary structure, F-type ATPases have 2 components, F(1) - the catalytic core - and F(0) - the membrane proton channel. F(1) has five subunits: alpha(3), beta(3), gamma(1), delta(1), epsilon(1). F(0) has three main subunits: a(1), b(2) and c(10-14). The alpha and beta chains form an alternating ring which encloses part of the gamma chain. F(1) is attached to F(0) by a central stalk formed by the gamma and epsilon chains, while a peripheral stalk is formed by the delta and b chains.

It is found in the cell inner membrane. Its function is as follows. F(1)F(0) ATP synthase produces ATP from ADP in the presence of a proton or sodium gradient. F-type ATPases consist of two structural domains, F(1) containing the extramembraneous catalytic core and F(0) containing the membrane proton channel, linked together by a central stalk and a peripheral stalk. During catalysis, ATP synthesis in the catalytic domain of F(1) is coupled via a rotary mechanism of the central stalk subunits to proton translocation. Functionally, component of the F(0) channel, it forms part of the peripheral stalk, linking F(1) to F(0). The b'-subunit is a diverged and duplicated form of b found in plants and photosynthetic bacteria. This Bradyrhizobium diazoefficiens (strain JCM 10833 / BCRC 13528 / IAM 13628 / NBRC 14792 / USDA 110) protein is ATP synthase subunit b 2 (atpF2).